A 387-amino-acid polypeptide reads, in one-letter code: Odorant receptor 94a (387 aa).

The Cytoplasmic segment spans residues 1-45 (MDKHKDRIESMRLILQVMQLFGLWPWSLKSEEEWTFTGFVKRNYR). A helical transmembrane segment spans residues 46–66 (FLLHLPITFTFIGLMWLEAFI). Over 67–75 (SSNLEQAGQ) the chain is Extracellular. Residues 76-96 (VLYMSITEMALVVKILSIWHY) form a helical membrane-spanning segment. Residues 97-133 (RTEAWRLMYELQHAPDYQLHNQEEVDFWRREQRFFKW) are Cytoplasmic-facing. Residues 134–154 (FFYIYILISLGVVYSGCTGVL) form a helical membrane-spanning segment. Topologically, residues 155 to 191 (FLEGYELPFAYYVPFEWQNERRYWFAYGYDMAGMTLT) are extracellular. The chain crosses the membrane as a helical span at residues 192–212 (CISNITLDTLGCYFLFHISLL). Residues 213–255 (YRLLGLRLRETKNMKNDTIFGQQLRAIFIMHQRIRSLTLTCQR) are Cytoplasmic-facing. The helical transmembrane segment at 256–276 (IVSPYILSQIILSALIICFSG) threads the bilayer. Topologically, residues 277 to 290 (YRLQHVGIRDNPGQ) are extracellular. The helical transmembrane segment at 291–311 (FISMLQFVSVMILQIYLPCYY) threads the bilayer. Residues 312-362 (GNEITVYANQLTNEVYHTNWLECRPPIRKLLNAYMEHLKKPVTIRAGNFFA) lie on the Cytoplasmic side of the membrane. The helical transmembrane segment at 363–383 (VGLPIFVKTINNAYSFLALLL) threads the bilayer. N-linked (GlcNAc...) asparagine glycosylation is present at Asn-384. The Extracellular segment spans residues 384–387 (NVSN).

This sequence belongs to the insect chemoreceptor superfamily. Heteromeric odorant receptor channel (TC 1.A.69) family. Or2a subfamily. Interacts with Orco. Complexes exist early in the endomembrane system in olfactory sensory neurons (OSNs), coupling these complexes to the conserved ciliary trafficking pathway.

Its subcellular location is the cell membrane. In terms of biological role, odorant receptor which mediates acceptance or avoidance behavior, depending on its substrates. The odorant receptor repertoire encodes a large collection of odor stimuli that vary widely in identity, intensity, and duration. May form a complex with Orco to form odorant-sensing units, providing sensitive and prolonged odorant signaling and calcium permeability. This chain is Odorant receptor 94a (Or94a), found in Drosophila melanogaster (Fruit fly).